Consider the following 311-residue polypeptide: Beta-lactamase (311 aa).

The tat-type signal signal peptide spans 1–34 (MRLTQAPPSRRTLMTLGAGATMAALLPAGGAAYA). Residue Ser-87 is the Acyl-ester intermediate of the active site. 255-257 (KTG) serves as a coordination point for substrate.

Belongs to the class-A beta-lactamase family. In terms of processing, predicted to be exported by the Tat system. The position of the signal peptide cleavage has not been experimentally proven.

It catalyses the reaction a beta-lactam + H2O = a substituted beta-amino acid. In Kitasatospora aureofaciens (Streptomyces aureofaciens), this protein is Beta-lactamase (bla).